Here is a 235-residue protein sequence, read N- to C-terminus: Secretory carrier-associated membrane protein 5 (235 aa).

Residues 1–39 (MAEKVNNFPPLPKFIPLKPCFYQDFEADIPPQHLSLTKR) lie on the Cytoplasmic side of the membrane. The helical transmembrane segment at 40–60 (LYYLWMLNSVTLAVNLVGCLA) threads the bilayer. Residues 61–67 (WLIGGGG) are Extracellular-facing. A helical membrane pass occupies residues 68–88 (ATNFGLAFLWLILFTPCSYVC). The Cytoplasmic segment spans residues 89-102 (WFRPIYKAFKTDSS). A helical membrane pass occupies residues 103 to 125 (FSFMAFFFTFMAQLVISIIQAVG). Topologically, residues 126 to 148 (IPGWGVCGWIATISFFGTNIGSA) are extracellular. A helical membrane pass occupies residues 149–169 (VVMLIPTVMFTVVAVFSFIAL). The Cytoplasmic segment spans residues 170–235 (SMVHKFYRGS…TPNYTYSNEM (66 aa)).

It belongs to the SCAMP family. SCAMP5 subfamily. As to quaternary structure, interacts (via C-terminal part) with SYT1 and SYT2; interaction with synaptotagmins making a link with the SNARE molecules. Interacts with SLC9A7. In terms of tissue distribution, brain-specific.

The protein localises to the cell membrane. It is found in the golgi apparatus membrane. It localises to the golgi apparatus. The protein resides in the trans-Golgi network membrane. Its subcellular location is the recycling endosome membrane. The protein localises to the cytoplasmic vesicle. It is found in the secretory vesicle. It localises to the synaptic vesicle membrane. Its function is as follows. Required for the calcium-dependent exocytosis of signal sequence-containing cytokines such as CCL5. Probably acts in cooperation with the SNARE machinery. In Mus musculus (Mouse), this protein is Secretory carrier-associated membrane protein 5 (Scamp5).